The sequence spans 4383 residues: Replicase polyprotein 1a (4383 aa).

The CoV Nsp1 globular domain maps to 54 to 196 (PENHVMVDCR…PWVMYLRKRG (143 aa)). Positions 216-246 (FKVEDAYDQVHDEPKGKFSKKAYALIRGYRG) constitute a BetaCoV Nsp1 C-terminal domain. Residues 250–514 (LLYVDQYGCD…VKETNLICKA (265 aa)) enclose the CoV Nsp2 N-terminal domain. The Zn(2+) site is built by Cys-392, Cys-397, Cys-413, and Cys-416. The C4 stretch occupies residues 392–416 (CEQDSCDFKGWIPGNMIDGFACTTC). The region spanning 524 to 713 (CGNLHQRELL…AQAFQSVAKV (190 aa)) is the CoV Nsp2 middle domain. The CoV Nsp2 C-terminal domain occupies 733–851 (RRRICLSGRK…LDQAWRVPCA (119 aa)). The region spanning 853–966 (RRVTFKEQPT…LYCAFTAPED (114 aa)) is the Ubiquitin-like 1 domain. The disordered stretch occupies residues 995–1025 (PCVASEQEESSEVLEDTLDDGPSVETSDSQV). Over residues 1000–1013 (EQEESSEVLEDTLD) the composition is skewed to acidic residues. One can recognise a Peptidase C16 1 domain in the interval 1036 to 1274 (DLESVIQDYE…IAQLYGSCIT (239 aa)). Catalysis depends on Cys-1074, which acts as the For PL1-PRO activity. 4 residues coordinate Zn(2+): Cys-1151, Cys-1154, Cys-1177, and Cys-1179. The C4-type 1 zinc-finger motif lies at 1151–1179 (CIKCDLALKLKGLDAMFFYGDVVSHICKC). Active-site for PL1-PRO activity residues include His-1225 and Asp-1236. Residues 1275–1435 (PNVCFVKGDI…LISKCQITAV (161 aa)) enclose the Macro domain. The region spanning 1491-1563 (DDARTFVQSN…VAQIKALFLD (73 aa)) is the DPUP domain. The Ubiquitin-like 2 domain maps to 1562–1617 (LDKVDILLTVDGVNFTNRFVPVGESFGKSLGNVFCDGVNVTKHKCDINYKGKVFFQ). The Peptidase C16 2 domain maps to 1631 to 1892 (SSFNFDQKEL…KIEYKPDLSQ (262 aa)). The active-site For PL2-PRO activity is the Cys-1671. Zn(2+) contacts are provided by Cys-1749, Cys-1751, Cys-1783, and Cys-1785. A C4-type 2 zinc finger spans residues 1749 to 1785 (CKCGVKQEQRTGLDAVMHFGTLSREDLEIGYTVDCSC). Active-site for PL2-PRO activity residues include His-1828 and Asp-1842. Residues 1906–2007 (IKAQFKTFEK…TYFNRPLLVD (102 aa)) enclose the Nucleic acid-binding domain. The 150-residue stretch at 2020-2169 (DDSGDSSESG…ADNKVIYTTE (150 aa)) folds into the G2M domain. 3 consecutive transmembrane segments (helical) span residues 2138–2158 (TSAC…WIKI), 2199–2219 (ACII…NVIF), and 2221–2241 (DFYL…AQWI). The segment at 2138 to 2385 (TSACFNFIKW…ASFIKLFSLF (248 aa)) is HD1. The 3Ecto domain occupies 2235 to 2296 (GKIAQWIKNT…AIDVVQYEAD (62 aa)). 2 disulfide bridges follow: Cys-2251–Cys-2275 and Cys-2266–Cys-2272. Transmembrane regions (helical) follow at residues 2313–2333 (LIVS…LISI), 2343–2363 (LFML…ANML), and 2365–2385 (AHVF…FSLF). The Y1 stretch occupies residues 2383 to 2473 (SLFKHVAYGC…ELKRPIQPTD (91 aa)). In terms of domain architecture, CoV Nsp3 Y spans 2383-2750 (SLFKHVAYGC…LTTPFSLKGG (368 aa)). The Zn(2+) site is built by His-2387, Cys-2392, Cys-2397, Cys-2400, Cys-2433, His-2436, Cys-2440, and Cys-2443. The ZF1 stretch occupies residues 2387 to 2400 (HVAYGCSKSGCLFC). The tract at residues 2433–2443 (CSKHQWNCIDC) is ZF2. Positions 2474 to 2566 (VAYHTVTDVK…MVDKNLITTA (93 aa)) are Y2. Residues 2474–2750 (VAYHTVTDVK…LTTPFSLKGG (277 aa)) are coV-Y. The interval 2567–2649 (NTGTSVTETM…DSVMSAVSAG (83 aa)) is Y3. The tract at residues 2650–2750 (LELTDESCNN…LTTPFSLKGG (101 aa)) is Y4. 7 helical membrane passes run 2752–2772 (VFSY…IGLW), 2824–2844 (STFG…VAVI), 3009–3029 (VFDL…FLAL), 3031–3051 (ASSI…YYLI), 3063–3083 (VVFV…VFQV), 3090–3110 (VYAI…SVIM), and 3115–3135 (LVMY…AVVV). The interval 2752 to 3135 (VFSYFVYVCF…FCLLYIAVVV (384 aa)) is HD2. The 98-residue stretch at 3149-3246 (LGTSVRSDGT…TASVSTSFLQ (98 aa)) folds into the Nsp4C domain. The 303-residue stretch at 3247-3549 (SGIVKMVNPT…YQQLAGIKLQ (303 aa)) folds into the Peptidase C30 domain. Active-site for 3CL-PRO activity residues include His-3287 and Cys-3391. Residues 3319 to 3775 (LSLTVMSYQM…IISCYWGLFS (457 aa)) are HD3. 7 helical membrane-spanning segments follow: residues 3558–3578 (GTVC…TAFV), 3588–3608 (TNMF…MLLV), 3615–3635 (LTMY…LVVY), 3657–3677 (TYTD…FVTL), 3684–3704 (LFSF…WYKG), 3711–3731 (ILLM…LSMA), and 3755–3775 (IVLL…GLFS). Positions 3837–3925 (SKLTDVKCAN…DYAKDNTVLQ (89 aa)) constitute a RdRp Nsp7 cofactor domain. In terms of domain architecture, RdRp Nsp8 cofactor spans 3926–4122 (ALQSEFVNMA…YNEVSATVLQ (197 aa)). The Nsp9 ssRNA-binding domain occupies 4123–4232 (NNELMPAKLK…GTISSTVRLQ (110 aa)). One can recognise an ExoN/MTase coactivator domain in the interval 4233 to 4370 (AGTATEYASN…CVSTDTTVQS (138 aa)). Residues Cys-4306, Cys-4309, His-4315, Cys-4322, Cys-4348, Cys-4351, Cys-4359, and Cys-4361 each coordinate Zn(2+). 2 zinc fingers span residues 4306-4322 (CIYC…DGLC) and 4348-4361 (CRVC…SCSC).

This sequence belongs to the coronaviruses polyprotein 1ab family. 3CL-PRO exists as monomer and homodimer. Eight copies of nsp7 and eight copies of nsp8 assemble to form a heterohexadecamer. Nsp9 is a dimer. Nsp10 forms a dodecamer. Specific enzymatic cleavages in vivo by its own proteases yield mature proteins. 3CL-PRO and PL-PRO proteinases are autocatalytically processed.

The protein localises to the host membrane. It localises to the host cytoplasm. The protein resides in the host perinuclear region. It carries out the reaction Thiol-dependent hydrolysis of ester, thioester, amide, peptide and isopeptide bonds formed by the C-terminal Gly of ubiquitin (a 76-residue protein attached to proteins as an intracellular targeting signal).. The catalysed reaction is TSAVLQ-|-SGFRK-NH2 and SGVTFQ-|-GKFKK the two peptides corresponding to the two self-cleavage sites of the SARS 3C-like proteinase are the two most reactive peptide substrates. The enzyme exhibits a strong preference for substrates containing Gln at P1 position and Leu at P2 position.. The enzyme catalyses a 5'-end diphospho-ribonucleoside in mRNA + GTP + H(+) = a 5'-end (5'-triphosphoguanosine)-ribonucleoside in mRNA + diphosphate. The papain-like proteinase 1 (PL1-PRO) and papain-like proteinase 2 (PL2-PRO) are responsible for the cleavages located at the N-terminus of the replicase polyprotein. In addition, PLP2 possesses a deubiquitinating/deISGylating activity and processes both 'Lys-48'- and 'Lys-63'-linked polyubiquitin chains from cellular substrates. Antagonizes innate immune induction of type I interferon by blocking the phosphorylation, dimerization and subsequent nuclear translocation of host IRF-3. In terms of biological role, responsible for the majority of cleavages as it cleaves the C-terminus of replicase polyprotein at 11 sites. Recognizes substrates containing the core sequence [ILMVF]-Q-|-[SGACN]. Inhibited by the substrate-analog Cbz-Val-Asn-Ser-Thr-Leu-Gln-CMK. Also contains an ADP-ribose-1''-phosphate (ADRP)-binding function. Its function is as follows. Nsp7-nsp8 hexadecamer may possibly confer processivity to the polymerase, maybe by binding to dsRNA or by producing primers utilized by the latter. Functionally, catalytic subunit of viral RNA capping enzyme which catalyzes the RNA guanylyltransferase reaction for genomic and sub-genomic RNAs. The kinase-like NiRAN domain of NSP12 transfers RNA to the amino terminus of NSP9, forming a covalent RNA-protein intermediate. Subsequently, the NiRAN domain transfers RNA to GDP, forming the core cap structure GpppA-RNA. The NSP14 and NSP16 methyltransferases then add methyl groups to form functional cap structures. Binds to the 40S ribosomal subunit and inhibits host translation. The nsp1-40S ribosome complex further induces an endonucleolytic cleavage near the 5'UTR of host mRNAs, targeting them for degradation. This inhibits the integrated stress response (ISR) in the infected cell by preventing EIF2S1/eIF2-alpha phosphorylation upstream of stress granule formation and depletes host G3BP1. By suppressing host gene expression, nsp1 facilitates efficient viral gene expression in infected cells and evasion from host immune response. This Human coronavirus OC43 (HCoV-OC43) protein is Replicase polyprotein 1a.